The following is a 108-amino-acid chain: Small ribosomal subunit protein uS10 (108 aa).

This sequence belongs to the universal ribosomal protein uS10 family. In terms of assembly, part of the 30S ribosomal subunit.

Functionally, involved in the binding of tRNA to the ribosomes. The polypeptide is Small ribosomal subunit protein uS10 (Mycoplasma pneumoniae (strain ATCC 29342 / M129 / Subtype 1) (Mycoplasmoides pneumoniae)).